The primary structure comprises 689 residues: Glycine--tRNA ligase beta subunit (689 aa).

This sequence belongs to the class-II aminoacyl-tRNA synthetase family. Tetramer of two alpha and two beta subunits.

Its subcellular location is the cytoplasm. The catalysed reaction is tRNA(Gly) + glycine + ATP = glycyl-tRNA(Gly) + AMP + diphosphate. The protein is Glycine--tRNA ligase beta subunit of Shewanella halifaxensis (strain HAW-EB4).